We begin with the raw amino-acid sequence, 505 residues long: ATP synthase subunit alpha, chloroplastic (505 aa).

170–177 is an ATP binding site; the sequence is GDRQTGKT.

The protein belongs to the ATPase alpha/beta chains family. F-type ATPases have 2 components, CF(1) - the catalytic core - and CF(0) - the membrane proton channel. CF(1) has five subunits: alpha(3), beta(3), gamma(1), delta(1), epsilon(1). CF(0) has four main subunits: a, b, b' and c.

It is found in the plastid. The protein localises to the chloroplast thylakoid membrane. It catalyses the reaction ATP + H2O + 4 H(+)(in) = ADP + phosphate + 5 H(+)(out). Its function is as follows. Produces ATP from ADP in the presence of a proton gradient across the membrane. The alpha chain is a regulatory subunit. This is ATP synthase subunit alpha, chloroplastic from Carica papaya (Papaya).